An 89-amino-acid chain; its full sequence is Protein S100-A6 (89 aa).

2 consecutive EF-hand domains span residues 12 to 47 and 48 to 83; these read LVAIFHKYSGKEGDKHTLSKKELKELIQKELTIGAK and LQDAEIARLMDDLDRNKDQEVNFQEYVAFLGALALI. Ca(2+) is bound by residues Thr-28 and Glu-33. N6-acetyllysine is present on Lys-40. Lys-47 bears the N6-acetyllysine; alternate mark. Lys-47 carries the post-translational modification N6-succinyllysine; alternate. Positions 61, 63, 65, 67, and 72 each coordinate Ca(2+).

Belongs to the S-100 family. In terms of assembly, homodimer; head to tail assembly of 2 subunits. Interacts with CACYBP in a calcium-dependent manner. Interacts with ANXA2 and ANXA11 (via N-terminus). Interacts with SUGT1. Interacts with TP53; has higher affinity for TP53 that is phosphorylated on its N-terminal domain, and lower affinity for TP53 that is phosphorylated on its C-terminal domain. Interacts with tropomyosin. Interacts with FKBP4. Interacts with PPP5C (via TPR repeats); the interaction is calcium-dependent and modulates PPP5C activity. Interacts with TPPP; this interaction inhibits TPPP dimerization.

The protein localises to the nucleus envelope. The protein resides in the cytoplasm. It is found in the cell membrane. May function as calcium sensor and modulator, contributing to cellular calcium signaling. May function by interacting with other proteins, such as TPR-containing proteins, and indirectly play a role in many physiological processes such as the reorganization of the actin cytoskeleton and in cell motility. Binds 2 calcium ions. Calcium binding is cooperative. The protein is Protein S100-A6 (S100a6) of Rattus norvegicus (Rat).